The sequence spans 271 residues: uncharacterized protein (271 aa).

Solcar repeat units follow at residues 3–74, 81–163, and 171–268; these read VQTL…AKRR, EGAI…SKKY, and DISV…FKSK. 6 helical membrane passes run 5-26, 49-69, 84-104, 138-158, 170-190, and 240-261; these read TLMAASAGAVASRLLCHPIDTI, GLPISLTLITPATCLYLSTYV, ILYSICGMTAEVVSSFVWTPL, GYWMGVAIYLPTTVSWWVCYE, WDISVIAPICSALGTVVATTI, and FTRGLFTRMCYIMPSGMISMSV.

The protein belongs to the mitochondrial carrier (TC 2.A.29) family.

The protein localises to the mitochondrion inner membrane. This is an uncharacterized protein from Schizosaccharomyces pombe (strain 972 / ATCC 24843) (Fission yeast).